The following is a 348-amino-acid chain: Flagellar P-ring protein (348 aa).

The signal sequence occupies residues 1 to 16; sequence MRVLTIFLLFMTSIFA.

This sequence belongs to the FlgI family. As to quaternary structure, the basal body constitutes a major portion of the flagellar organelle and consists of four rings (L,P,S, and M) mounted on a central rod.

Its subcellular location is the periplasm. The protein resides in the bacterial flagellum basal body. In terms of biological role, assembles around the rod to form the L-ring and probably protects the motor/basal body from shearing forces during rotation. This chain is Flagellar P-ring protein, found in Campylobacter jejuni subsp. doylei (strain ATCC BAA-1458 / RM4099 / 269.97).